The primary structure comprises 117 residues: uncharacterized protein (117 aa).

3 helical membrane-spanning segments follow: residues valine 32–valine 52, valine 56–leucine 76, and leucine 87–phenylalanine 107.

It localises to the membrane. This is an uncharacterized protein from Saccharomyces cerevisiae (strain ATCC 204508 / S288c) (Baker's yeast).